The sequence spans 370 residues: Flagellar P-ring protein (370 aa).

The N-terminal stretch at 1-21 (MRLFSVVLAVFTLLLPSQAFA) is a signal peptide.

It belongs to the FlgI family. In terms of assembly, the basal body constitutes a major portion of the flagellar organelle and consists of four rings (L,P,S, and M) mounted on a central rod.

The protein resides in the periplasm. It localises to the bacterial flagellum basal body. Functionally, assembles around the rod to form the L-ring and probably protects the motor/basal body from shearing forces during rotation. The protein is Flagellar P-ring protein of Alteromonas mediterranea (strain DSM 17117 / CIP 110805 / LMG 28347 / Deep ecotype).